The primary structure comprises 130 residues: T-cell receptor beta chain V region A20.2.25 (130 aa).

The N-terminal stretch at 1 to 21 (MSCRLLLYVSLCLVETALMNT) is a signal peptide. Residues 22–112 (KITQSPRYLI…DSAVYFCASS (91 aa)) are v segment. Asparagine 36 and asparagine 75 each carry an N-linked (GlcNAc...) asparagine glycan. The tract at residues 113-115 (HGE) is d segment. The interval 116–130 (NTEVFFGKGTTLTVV) is j segment.

The protein is T-cell receptor beta chain V region A20.2.25 of Mus musculus (Mouse).